The sequence spans 242 residues: Octanoyltransferase (242 aa).

Positions 31–206 (SQTTDEIWFL…LFLKNFGYNQ (176 aa)) constitute a BPL/LPL catalytic domain. Substrate is bound by residues 70 to 77 (RGGQVTYH), 137 to 139 (SIG), and 150 to 152 (GLA). Catalysis depends on C168, which acts as the Acyl-thioester intermediate.

It belongs to the LipB family.

The protein localises to the cytoplasm. It catalyses the reaction octanoyl-[ACP] + L-lysyl-[protein] = N(6)-octanoyl-L-lysyl-[protein] + holo-[ACP] + H(+). It participates in protein modification; protein lipoylation via endogenous pathway; protein N(6)-(lipoyl)lysine from octanoyl-[acyl-carrier-protein]: step 1/2. Functionally, catalyzes the transfer of endogenously produced octanoic acid from octanoyl-acyl-carrier-protein onto the lipoyl domains of lipoate-dependent enzymes. Lipoyl-ACP can also act as a substrate although octanoyl-ACP is likely to be the physiological substrate. In Coxiella burnetii (strain RSA 493 / Nine Mile phase I), this protein is Octanoyltransferase.